Here is a 322-residue protein sequence, read N- to C-terminus: 2-methylene-furan-3-one reductase (322 aa).

NADP(+) contacts are provided by residues K59, 174-175 (GV), 197-200 (STKK), Y215, I253, 264-266 (FVL), 311-312 (RA), and 311-322 (RATGKVVVYPIP). Residue K59 coordinates substrate.

Belongs to the zinc-containing alcohol dehydrogenase family. Quinone oxidoreductase subfamily. As to quaternary structure, monomer. In terms of processing, the N-terminus is blocked.

The catalysed reaction is 4-hydroxy-2,5-dimethyl-furan-3(2H)-one + NADP(+) = 4-hydroxy-5-methyl-2-methylenefuran-3(2H)-one + NADPH + H(+). Enone oxidoreductase involved in the biosynthesis of 4-hydroxy-2,5-dimethyl-3(2H)-furanone (HDMF or furaneol), the key flavor compound in strawberries. Can use both NADH and NADPH as the electron donor. This chain is 2-methylene-furan-3-one reductase (EO), found in Fragaria ananassa (Strawberry).